The following is a 536-amino-acid chain: Chaperonin GroEL 2 (536 aa).

ATP-binding positions include 29–32, Lys50, Gly416, and Asp497; that span reads TLGP.

Belongs to the chaperonin (HSP60) family. As to quaternary structure, forms a cylinder of 14 subunits composed of two heptameric rings stacked back-to-back. Interacts with the co-chaperonin GroES.

It localises to the cytoplasm. It carries out the reaction ATP + H2O + a folded polypeptide = ADP + phosphate + an unfolded polypeptide.. Its function is as follows. Together with its co-chaperonin GroES, plays an essential role in assisting protein folding. The GroEL-GroES system forms a nano-cage that allows encapsulation of the non-native substrate proteins and provides a physical environment optimized to promote and accelerate protein folding. The chain is Chaperonin GroEL 2 from Chlamydia caviae (strain ATCC VR-813 / DSM 19441 / 03DC25 / GPIC) (Chlamydophila caviae).